The primary structure comprises 341 residues: Glycerol-3-phosphate dehydrogenase [NAD(P)+] (341 aa).

Residues serine 14, phenylalanine 15, arginine 35, and lysine 108 each contribute to the NADPH site. 2 residues coordinate sn-glycerol 3-phosphate: lysine 108 and glycine 136. Position 140 (alanine 140) interacts with NADPH. Lysine 191, aspartate 244, serine 254, arginine 255, and asparagine 256 together coordinate sn-glycerol 3-phosphate. The Proton acceptor role is filled by lysine 191. Position 255 (arginine 255) interacts with NADPH. Residues valine 279 and glutamate 281 each contribute to the NADPH site.

Belongs to the NAD-dependent glycerol-3-phosphate dehydrogenase family.

Its subcellular location is the cytoplasm. It carries out the reaction sn-glycerol 3-phosphate + NAD(+) = dihydroxyacetone phosphate + NADH + H(+). It catalyses the reaction sn-glycerol 3-phosphate + NADP(+) = dihydroxyacetone phosphate + NADPH + H(+). The protein operates within membrane lipid metabolism; glycerophospholipid metabolism. In terms of biological role, catalyzes the reduction of the glycolytic intermediate dihydroxyacetone phosphate (DHAP) to sn-glycerol 3-phosphate (G3P), the key precursor for phospholipid synthesis. The protein is Glycerol-3-phosphate dehydrogenase [NAD(P)+] of Pseudomonas putida (strain ATCC 47054 / DSM 6125 / CFBP 8728 / NCIMB 11950 / KT2440).